A 217-amino-acid chain; its full sequence is Glycosylphosphatidylinositol anchor biosynthesis protein 11 (217 aa).

The next 2 membrane-spanning stretches (helical) occupy residues 45–65 and 68–88; these read TWLTIPWHLIALVYIYVKVFN and NTAELLACLVPLQILYTIFQF. A glycan (N-linked (GlcNAc...) asparagine) is linked at Asn-102. The next 4 membrane-spanning stretches (helical) occupy residues 107–127, 134–154, 169–189, and 197–217; these read AISILACIVLSIPVVVIIILF, LLWETWLLALHCSFLAYPAVY, YFILIVVGCWISCVVIPLDWD, and IPIVIGAYLGAFVGFAYGAYL.

The protein belongs to the PIGF family.

The protein localises to the endoplasmic reticulum membrane. The protein operates within glycolipid biosynthesis; glycosylphosphatidylinositol-anchor biosynthesis. Acts in the GPI biosynthetic pathway between GlcNAc-PI synthesis and GPI transfer to protein. This is Glycosylphosphatidylinositol anchor biosynthesis protein 11 (GPI11) from Candida glabrata (strain ATCC 2001 / BCRC 20586 / JCM 3761 / NBRC 0622 / NRRL Y-65 / CBS 138) (Yeast).